Reading from the N-terminus, the 215-residue chain is MANVYDWFEERLEIQAIAEDVTSKYVPPHVNIFYCLGGITLVCFLIQFATGFAMTFYYKPTVAEAYSSVQYIMNEVNFGWLIRSIHRWSASMMVLMMILHVFRVYLTGGFKKPRELTWVSGVILAVITVSFGVTGYSLPWDQVGYWAVKIVSGVPEAIPVVGVLISDLLRGGSSVGQATLTRYYSAHTFVLPWLIAVFMLFHFLMIRKQGISGPL.

The chain crosses the membrane as a helical span at residues 32–52; sequence IFYCLGGITLVCFLIQFATGF. C35 lines the heme c pocket. Heme b-binding residues include H86 and H100. The next 3 membrane-spanning stretches (helical) occupy residues 90–110, 116–136, and 186–206; these read ASMM…TGGF, LTWV…VTGY, and AHTF…FLMI. Heme b-binding residues include H187 and H202.

Belongs to the cytochrome b family. PetB subfamily. The 4 large subunits of the cytochrome b6-f complex are cytochrome b6, subunit IV (17 kDa polypeptide, PetD), cytochrome f and the Rieske protein, while the 4 small subunits are PetG, PetL, PetM and PetN. The complex functions as a dimer. Requires heme b as cofactor. Heme c serves as cofactor.

It is found in the cellular thylakoid membrane. In terms of biological role, component of the cytochrome b6-f complex, which mediates electron transfer between photosystem II (PSII) and photosystem I (PSI), cyclic electron flow around PSI, and state transitions. This is Cytochrome b6 from Trichormus variabilis (strain ATCC 29413 / PCC 7937) (Anabaena variabilis).